A 633-amino-acid chain; its full sequence is Protein CASP (633 aa).

Over methionine 1–leucine 601 the chain is Cytoplasmic. Positions glutamine 39–proline 60 are disordered. 2 coiled-coil regions span residues isoleucine 111–lysine 339 and serine 369–glutamate 433. The helical; Anchor for type IV membrane protein transmembrane segment at phenylalanine 602–isoleucine 622 threads the bilayer. Residues alanine 623 to tyrosine 633 are Lumenal-facing.

The protein belongs to the CASP family.

It localises to the golgi apparatus membrane. Functionally, may be involved in intra-Golgi transport. The sequence is that of Protein CASP (coy1) from Schizosaccharomyces pombe (strain 972 / ATCC 24843) (Fission yeast).